The sequence spans 339 residues: Phosphate acyltransferase (339 aa).

Belongs to the PlsX family. As to quaternary structure, homodimer. Probably interacts with PlsY.

The protein localises to the cytoplasm. It catalyses the reaction a fatty acyl-[ACP] + phosphate = an acyl phosphate + holo-[ACP]. It participates in lipid metabolism; phospholipid metabolism. Its function is as follows. Catalyzes the reversible formation of acyl-phosphate (acyl-PO(4)) from acyl-[acyl-carrier-protein] (acyl-ACP). This enzyme utilizes acyl-ACP as fatty acyl donor, but not acyl-CoA. This Tolumonas auensis (strain DSM 9187 / NBRC 110442 / TA 4) protein is Phosphate acyltransferase.